The sequence spans 734 residues: Threonine--tRNA ligase, cytoplasmic (734 aa).

Residues 1–41 (MSASEAGVTEQVKKLSVKDSSNDAVKPNKKENKKSKQQSLY) are disordered. The span at 11 to 30 (QVKKLSVKDSSNDAVKPNKK) shows a compositional bias: basic and acidic residues. Residues 69–135 (SMPRVPLKIV…EGEANEEIKL (67 aa)) enclose the TGS domain. A phosphoserine mark is found at S195 and S289. Residues T297 and T381 each carry the phosphothreonine modification. Phosphoserine occurs at positions 453 and 457. T460 is modified (phosphothreonine). S605 is subject to Phosphoserine.

The protein belongs to the class-II aminoacyl-tRNA synthetase family.

It localises to the cytoplasm. It carries out the reaction tRNA(Thr) + L-threonine + ATP = L-threonyl-tRNA(Thr) + AMP + diphosphate + H(+). The sequence is that of Threonine--tRNA ligase, cytoplasmic (THS1) from Saccharomyces cerevisiae (strain ATCC 204508 / S288c) (Baker's yeast).